The chain runs to 177 residues: Probable inosine/xanthosine triphosphatase (177 aa).

The protein belongs to the YjjX NTPase family. In terms of assembly, homodimer. Requires Mg(2+) as cofactor. Mn(2+) serves as cofactor.

The catalysed reaction is XTP + H2O = XDP + phosphate + H(+). It catalyses the reaction ITP + H2O = IDP + phosphate + H(+). Its function is as follows. Phosphatase that hydrolyzes non-canonical purine nucleotides such as XTP and ITP to their respective diphosphate derivatives. Probably excludes non-canonical purines from DNA/RNA precursor pool, thus preventing their incorporation into DNA/RNA and avoiding chromosomal lesions. In Pyrobaculum islandicum (strain DSM 4184 / JCM 9189 / GEO3), this protein is Probable inosine/xanthosine triphosphatase.